The primary structure comprises 473 residues: Sensor histidine kinase YclK (473 aa).

Over 1 to 9 (MMKIKYLYQ) the chain is Cytoplasmic. Residues 10–30 (LLLSHISILILAFVIIISLFS) traverse the membrane as a helical segment. Over 31–164 (HFVKEFAYQN…GVEQMVNQVN (134 aa)) the chain is Extracellular. Residues 165–185 (LYMFYAVISTLVITILVSWLL) form a helical membrane-spanning segment. Residues 186-473 (SKFHVKRIQK…IRLPLTAKQQ (288 aa)) are Cytoplasmic-facing. Positions 187–239 (KFHVKRIQKLREATDKVASGDYDIHLENSYGDEIGVLASDFNIMAKKLKQSRD) constitute an HAMP domain. A Histidine kinase domain is found at 254–470 (DVSHELKTPL…KFIIRLPLTA (217 aa)). A Phosphohistidine; by autocatalysis modification is found at His257.

It localises to the cell membrane. It carries out the reaction ATP + protein L-histidine = ADP + protein N-phospho-L-histidine.. Its function is as follows. Could be member of the two-component regulatory system YclK/YclJ. Potentially phosphorylates YclJ. The chain is Sensor histidine kinase YclK (yclK) from Bacillus subtilis (strain 168).